The chain runs to 38 residues: Photosystem II reaction center protein L (38 aa).

Residues Ser-17–Phe-37 traverse the membrane as a helical segment.

It belongs to the PsbL family. In terms of assembly, PSII is composed of 1 copy each of membrane proteins PsbA, PsbB, PsbC, PsbD, PsbE, PsbF, PsbH, PsbI, PsbJ, PsbK, PsbL, PsbM, PsbT, PsbX, PsbY, PsbZ, Psb30/Ycf12, at least 3 peripheral proteins of the oxygen-evolving complex and a large number of cofactors. It forms dimeric complexes.

It is found in the plastid. The protein resides in the chloroplast thylakoid membrane. One of the components of the core complex of photosystem II (PSII). PSII is a light-driven water:plastoquinone oxidoreductase that uses light energy to abstract electrons from H(2)O, generating O(2) and a proton gradient subsequently used for ATP formation. It consists of a core antenna complex that captures photons, and an electron transfer chain that converts photonic excitation into a charge separation. This subunit is found at the monomer-monomer interface and is required for correct PSII assembly and/or dimerization. This is Photosystem II reaction center protein L from Amborella trichopoda.